Consider the following 722-residue polypeptide: Transcription factor kayak, isoforms D/sro (722 aa).

Residues 173-188 show a composition bias toward low complexity; the sequence is QHQTQQQHQSQQQQQH. Disordered stretches follow at residues 173–193, 283–317, and 350–407; these read QHQT…RQDY, LGQG…HTDS, and GSAS…KRRV. Residues 283–300 show a composition bias toward polar residues; sequence LGQGSESEDSNASYNDTQ. 2 stretches are compositionally biased toward low complexity: residues 308–317 and 350–364; these read TDTSSAHTDS and GSAS…TSNT. The 64-residue stretch at 385-448 folds into the bZIP domain; that stretch reads EQKRAVRRER…NQLEYLLATH (64 aa). Residues 387–406 form a basic motif region; it reads KRAVRRERNKQAAARCRKRR. Residues 413–420 are leucine-zipper; the sequence is LTEEVEQL. The span at 477-498 shows a compositional bias: low complexity; it reads AGSSGSGASSHHNHNSNDSSNG. Disordered stretches follow at residues 477–519 and 683–722; these read AGSS…PLDL and DGGT…LVSL. Positions 506–516 are enriched in polar residues; sequence TLNSTGRSNSP. Ser-515 is subject to Phosphoserine.

It belongs to the bZIP family. Fos subfamily. Homodimer. Heterodimer with Jra. The kay-Jra heterodimer binds more stably to the AP-1 site than either of the two proteins alone.

The protein resides in the nucleus. Its function is as follows. Developmentally regulated transcription factor AP-1 binds and recognizes the enhancer DNA sequence: 5'-TGA[CG]TCA-3'. May play a role in the function or determination of a particular subset of cells in the developing embryo. It is able to carry out its function either independently of or in conjunction with Jra. The sequence is that of Transcription factor kayak, isoforms D/sro from Drosophila melanogaster (Fruit fly).